A 64-amino-acid chain; its full sequence is Large ribosomal subunit protein bL35 (64 aa).

Residues 1–15 show a composition bias toward basic residues; sequence MPKSKTHSGTAKRFK. The segment at 1–23 is disordered; sequence MPKSKTHSGTAKRFKVSGSGKIL.

Belongs to the bacterial ribosomal protein bL35 family.

The polypeptide is Large ribosomal subunit protein bL35 (Rhodococcus jostii (strain RHA1)).